The following is a 1856-amino-acid chain: Protein TANC1 (1856 aa).

Met1 is modified (N-acetylmethionine). 5 disordered regions span residues 1–45 (MLKA…LSTT), 58–130 (SMSL…SCSP), 203–222 (KSPCETISSPSSTLESKDSG), 262–296 (RADNCSPVAEEETTGSAESVLPKAEPSAGDGPVPY), and 437–489 (IASS…RPRE). Basic and acidic residues predominate over residues 8–21 (KSREGGKGSKKEAG). Positions 29-45 (PALSSSGDSPVNSLSTT) are enriched in polar residues. Ser60, Ser63, Ser64, Ser204, Ser267, and Ser462 each carry phosphoserine. Low complexity predominate over residues 60–77 (SLPSSPLLPRQSLLTQSR). The span at 203–216 (KSPCETISSPSSTL) shows a compositional bias: polar residues. The span at 439 to 475 (SSSPSLSPKSSDPTQDLPGTPLLSPSSSTSALSVTRT) shows a compositional bias: low complexity. ANK repeat units follow at residues 893–925 (EGLSAALASLRNLYTPNVKVSRLLILGGANVNY), 931–960 (NNAPILCVQSHLGHEEVVTLLLEFGACLDG), 964–993 (NGMNALCYAAAAGHMKLVCLLIKKGARVDH), 997–1026 (KGQCALVHSALRGHSDILQYLLNCEWSAGP), 1037–1066 (ALQQALTAAASMGHSSVVQSLLGMAEEHEI), 1075–1104 (WGETALTAAAGRGKVEICELLLERGAAVSR), 1108–1137 (RGVPPLFCAARQGHWQVVRLLLDRGCDVNL), 1141–1170 (QGRTPLMVASCEGHLSTVEFLLSKGAALSS), 1174–1203 (EGLSALSWACLKGHRAVVQYLVEEGAEIDQ), 1207–1236 (NGRTPLDLAAFYGDAETVLYLVEKGAVIEH), and 1240–1269 (SGMRPLDRAIGCRNTAVVVTLLRKGAKLGN). TPR repeat units follow at residues 1286-1319 (LQKLVEEGNVMYKKGKMKEAAQRYQYALRKFPRE), 1333-1366 (VSLYLNLSRCRRKTNDFGLAEEFASKALELKPKS), and 1368-1400 (EAFYARARAKRNSRQFLAALADLQEAVKLCPNN). Residues 1417 to 1426 (LQRNQQQKQQ) show a composition bias toward low complexity. 3 disordered regions span residues 1417 to 1597 (LQRN…FGDR), 1636 to 1720 (DMAP…NTPF), and 1832 to 1856 (HVSTEAHRSHLTSAKPKRSFIESNV). Ser1436 and Ser1463 each carry phosphoserine. Residues 1454–1463 (EEAEEEDTSS) are compositionally biased toward acidic residues. Polar residues-rich tracts occupy residues 1490–1505 (EGLQSKGRSASPQSRA) and 1524–1556 (PTKQAQIVKTNQHLGSGQSSMRNSSTKIQVSSQ). A compositionally biased stretch (low complexity) spans 1656–1686 (SLSSSGSSGSPSSSIKMSSSTSSLTSSSSVS). 3 positions are modified to phosphoserine: Ser1665, Ser1673, and Ser1674.

It belongs to the TANC family. In terms of assembly, interacts probably directly with DLG1, DLG4, HOMER1. Interacts with DLGAP1, INA, CAMK2A, GRIN2B and GRIA1. Interacts with TNIK and MINK1. Post-translationally, phosphorylated; by MINK1 and TNIK upon stimulation by RAP2A.

It localises to the postsynaptic density. Functionally, may be a scaffold component in the postsynaptic density. The polypeptide is Protein TANC1 (Tanc1) (Mus musculus (Mouse)).